The following is a 415-amino-acid chain: Chorismate synthase (415 aa).

The segment at 43 to 72 is disordered; that stretch reads EDLDRRKPGQSMITTSRGEPDKVSIKSGLQ. Arginine 48 provides a ligand contact to NADP(+). Residues 125 to 127, glycine 304, 319 to 323, and arginine 346 each bind FMN; these read RSS and HAPVS. The interval 262–310 is disordered; that stretch reads TDYTEDWEFGESEATASENASGDEPRARGDPKPVGNDHGGIQGGITTGD. Positions 298–307 are enriched in gly residues; sequence DHGGIQGGIT. The span at 379–393 shows a compositional bias: basic and acidic residues; it reads PDRLDDRPGEYDTDY. The segment at 379–415 is disordered; sequence PDRLDDRPGEYDTDYHPSSPRNDPEDADTHATTVDED.

It belongs to the chorismate synthase family. The cofactor is FMNH2.

It carries out the reaction 5-O-(1-carboxyvinyl)-3-phosphoshikimate = chorismate + phosphate. The protein operates within metabolic intermediate biosynthesis; chorismate biosynthesis; chorismate from D-erythrose 4-phosphate and phosphoenolpyruvate: step 7/7. Catalyzes the anti-1,4-elimination of the C-3 phosphate and the C-6 proR hydrogen from 5-enolpyruvylshikimate-3-phosphate (EPSP) to yield chorismate, which is the branch point compound that serves as the starting substrate for the three terminal pathways of aromatic amino acid biosynthesis. This reaction introduces a second double bond into the aromatic ring system. The chain is Chorismate synthase from Halomicrobium mukohataei (strain ATCC 700874 / DSM 12286 / JCM 9738 / NCIMB 13541) (Haloarcula mukohataei).